A 459-amino-acid chain; its full sequence is Cyclin-dependent kinase F-4 (459 aa).

One can recognise a Protein kinase domain in the interval 4–283; the sequence is FKMIKEVGDG…AAEVLQHTFF (280 aa). ATP contacts are provided by residues 10–18 and lysine 33; that span reads VGDGTFGSV. Aspartate 125 (proton acceptor) is an active-site residue. Serine 151 is modified (phosphoserine). Threonine 156 carries the phosphothreonine modification. The interval 310–397 is disordered; it reads KGVSEHGMPR…RHSRSLPETG (88 aa). Polar residues-rich tracts occupy residues 322–346 and 366–375; these read STGT…SKTG and ESNNKLTTNR.

The protein belongs to the protein kinase superfamily. CMGC Ser/Thr protein kinase family. CDC2/CDKX subfamily.

It catalyses the reaction L-seryl-[protein] + ATP = O-phospho-L-seryl-[protein] + ADP + H(+). The catalysed reaction is L-threonyl-[protein] + ATP = O-phospho-L-threonyl-[protein] + ADP + H(+). The enzyme catalyses [DNA-directed RNA polymerase] + ATP = phospho-[DNA-directed RNA polymerase] + ADP + H(+). This chain is Cyclin-dependent kinase F-4 (CDKF-4), found in Oryza sativa subsp. japonica (Rice).